A 237-amino-acid polypeptide reads, in one-letter code: UPF0758 protein Veis_1654 (237 aa).

Positions 115–237 (VFDTPDAVKH…ALSMAEMGLL (123 aa)) constitute an MPN domain. The Zn(2+) site is built by histidine 186, histidine 188, and aspartate 199. Positions 186–199 (HNHPSGSVQPSRAD) match the JAMM motif motif.

It belongs to the UPF0758 family.

This Verminephrobacter eiseniae (strain EF01-2) protein is UPF0758 protein Veis_1654.